Reading from the N-terminus, the 522-residue chain is MFFFKGVVAVLSFFSAVNAAPFMKPNNGTRNYIPDSYIVLLKRDISHDDFELHKRWASDVHKRDVAKRGISFSGIGHSWATGSFRGYSGVFSRDTIEEIMKHEHVAHVERDQIGTSQGWVTQSGAPNWGLGRLSNNSPGNTDYTYDENAGGNGVVYVIDSGIDTMHPEFQGRATWGANFIDKNNVDCWNHGTHCAGIIGSATFGVAKLTALIAVKVLDCNGQGPYSAFVAGLHWATKHAQDNGFIGRAIINFSLGGDNSPAVNQALEEAQRAGIFVSAAAGNFGSDAGSITPGGAGLICVIGNSDDRDYRWTGQGPSNFGARVDIFAPGTNILSTIPGGGSGVMTGTSMAAPHVAGQAAILASISGSGFDLGAACAFFKNSASASVKNPGPNTTNKLLVNGANGTKGPKQGENKPNKPPGQDEQPGQNKPPSQNPPPGQNPPPGQNPPPEQPAPSPPANPGDEPNPDGQPYPGDQPNPGDSGPSWWMPSGGLQPPAWWNRRPSFGGWNRPMWWNRPLSVWKL.

The first 19 residues, 1-19, serve as a signal peptide directing secretion; sequence MFFFKGVVAVLSFFSAVNA. A propeptide spanning residues 20 to 117 is cleaved from the precursor; sequence APFMKPNNGT…VERDQIGTSQ (98 aa). The region spanning 36-113 is the Inhibitor I9 domain; that stretch reads SYIVLLKRDI…HVAHVERDQI (78 aa). In terms of domain architecture, Peptidase S8 spans 127 to 405; the sequence is NWGLGRLSNN…KLLVNGANGT (279 aa). Residues Asp159 and His190 each act as charge relay system in the active site. Asn251 is a glycosylation site (N-linked (GlcNAc...) asparagine). The Charge relay system role is filled by Ser348. The segment covering 384–397 has biased composition (polar residues); the sequence is ASVKNPGPNTTNKL. The interval 384-515 is disordered; it reads ASVKNPGPNT…GWNRPMWWNR (132 aa). N-linked (GlcNAc...) asparagine glycosylation is found at Asn392 and Asn403. Residues 432–459 show a composition bias toward pro residues; the sequence is SQNPPPGQNPPPGQNPPPEQPAPSPPAN.

The protein belongs to the peptidase S8 family.

The protein resides in the secreted. Its function is as follows. Secreted subtilisin-like serine protease with keratinolytic activity that contributes to pathogenicity. This is Subtilisin-like protease 10 (SUB10) from Arthroderma benhamiae (strain ATCC MYA-4681 / CBS 112371) (Trichophyton mentagrophytes).